The chain runs to 345 residues: Phosphoribosylformylglycinamidine cyclo-ligase (345 aa).

It belongs to the AIR synthase family.

The protein localises to the cytoplasm. It catalyses the reaction 2-formamido-N(1)-(5-O-phospho-beta-D-ribosyl)acetamidine + ATP = 5-amino-1-(5-phospho-beta-D-ribosyl)imidazole + ADP + phosphate + H(+). It functions in the pathway purine metabolism; IMP biosynthesis via de novo pathway; 5-amino-1-(5-phospho-D-ribosyl)imidazole from N(2)-formyl-N(1)-(5-phospho-D-ribosyl)glycinamide: step 2/2. The polypeptide is Phosphoribosylformylglycinamidine cyclo-ligase (Prochlorococcus marinus (strain MIT 9313)).